The following is a 560-amino-acid chain: Eukaryotic translation initiation factor 3 subunit D-1 (560 aa).

The segment at 98–166 is disordered; it reads VQKPPHQRGR…RGPPPKMRES (69 aa). The span at 100 to 121 shows a compositional bias: basic residues; the sequence is KPPHQRGRFRNMRNSRSGRGRN. A Phosphothreonine modification is found at T128. A compositionally biased stretch (basic residues) spans 147 to 156; it reads GRGMGKKFGH. Residues 291-305 are RNA gate; that stretch reads EFDLLTVNESSVEPP.

This sequence belongs to the eIF-3 subunit D family. Component of the eukaryotic translation initiation factor 3 (eIF-3) complex. The eIF-3 complex interacts with pix.

The protein resides in the cytoplasm. Functionally, mRNA cap-binding component of the eukaryotic translation initiation factor 3 (eIF-3) complex, which is involved in protein synthesis of a specialized repertoire of mRNAs and, together with other initiation factors, stimulates binding of mRNA and methionyl-tRNAi to the 40S ribosome. The eIF-3 complex specifically targets and initiates translation of a subset of mRNAs involved in cell proliferation. In the eIF-3 complex, eif3d specifically recognizes and binds the 7-methylguanosine cap of a subset of mRNAs. This Drosophila sechellia (Fruit fly) protein is Eukaryotic translation initiation factor 3 subunit D-1.